We begin with the raw amino-acid sequence, 223 residues long: Pyridoxal phosphate homeostasis protein (223 aa).

The residue at position 36 (Lys36) is an N6-(pyridoxal phosphate)lysine.

The protein belongs to the pyridoxal phosphate-binding protein YggS/PROSC family. In terms of assembly, monomer.

Functionally, pyridoxal 5'-phosphate (PLP)-binding protein, which is involved in PLP homeostasis. In Buchnera aphidicola subsp. Baizongia pistaciae (strain Bp), this protein is Pyridoxal phosphate homeostasis protein.